A 439-amino-acid chain; its full sequence is Deacetylvindoline O-acetyltransferase (439 aa).

Residue His-158 is the Proton acceptor of the active site. Residues 317-344 (TKLVINELRKEKQKIKNLSREKLTYVAQ) adopt a coiled-coil conformation. Asp-380 serves as the catalytic Proton acceptor.

It belongs to the plant acyltransferase family. As to quaternary structure, monomer. As to expression, predominantly expressed in young leaves of mature plants. Low expression in stems and flowers and not detected in roots. Confined to the laticifer and idioblast cells of leaves, stems, and flower buds.

It localises to the cytoplasm. It is found in the nucleus. It catalyses the reaction 4-O-deacetylvindoline + acetyl-CoA = vindoline + CoA. Its pathway is alkaloid biosynthesis; vindoline biosynthesis. Functionally, involved in the biosynthesis of vindoline, a precursor of vinblastine and vincristine. This Catharanthus roseus (Madagascar periwinkle) protein is Deacetylvindoline O-acetyltransferase.